We begin with the raw amino-acid sequence, 100 residues long: Large ribosomal subunit protein uL23 (100 aa).

This sequence belongs to the universal ribosomal protein uL23 family. As to quaternary structure, part of the 50S ribosomal subunit. Contacts protein L29, and trigger factor when it is bound to the ribosome.

One of the early assembly proteins it binds 23S rRNA. One of the proteins that surrounds the polypeptide exit tunnel on the outside of the ribosome. Forms the main docking site for trigger factor binding to the ribosome. The protein is Large ribosomal subunit protein uL23 of Prochlorococcus marinus (strain AS9601).